Here is a 492-residue protein sequence, read N- to C-terminus: MTEQKVDWEPVIGLETHVQLGTNSKIFTSASTSFGDDPNTHIDPIVCGLPGTLPVLNKKVLEFAVKASMALNLKIAKHCKFDRKQYFYPDLPKNYQISQFDEPIAEEGWIEVEVAEKGKETYLKKIGIERLHMEEDAGKLVHAGSDRLSGSKYSLVDYNRAGVALAEIVSKPDLRSGREASEYASEIRRIVRYLGVSDGNMQEGSLRCDVNISVRRGPNAPFGTKVEIKNMNSFSAIQKACEYEIKRQISTYESGGIVHQETRLWDETKQLTKSMRSKEGSSDYRYFPDPDLGPIEVSVELQEKWRSELPELPSSKRHRYAEELGLSVYDARVLTDDYQMARYFEIVVLEGADPKLASNWITGDIAAHINANKKSFENLLLTPKQLAEMLLLISQGKISGKIAKEILPELLEKGGSPKELVEERGLGMISDPKVLGAIVDQLLSDYPNEVESYRGGKNKLQGFFVGQLMKKTSGKADPKLGNQILTKKLKGE.

The protein belongs to the GatB/GatE family. GatB subfamily. Heterotrimer of A, B and C subunits.

The enzyme catalyses L-glutamyl-tRNA(Gln) + L-glutamine + ATP + H2O = L-glutaminyl-tRNA(Gln) + L-glutamate + ADP + phosphate + H(+). The catalysed reaction is L-aspartyl-tRNA(Asn) + L-glutamine + ATP + H2O = L-asparaginyl-tRNA(Asn) + L-glutamate + ADP + phosphate + 2 H(+). Allows the formation of correctly charged Asn-tRNA(Asn) or Gln-tRNA(Gln) through the transamidation of misacylated Asp-tRNA(Asn) or Glu-tRNA(Gln) in organisms which lack either or both of asparaginyl-tRNA or glutaminyl-tRNA synthetases. The reaction takes place in the presence of glutamine and ATP through an activated phospho-Asp-tRNA(Asn) or phospho-Glu-tRNA(Gln). The chain is Aspartyl/glutamyl-tRNA(Asn/Gln) amidotransferase subunit B from Prochlorococcus marinus (strain SARG / CCMP1375 / SS120).